Consider the following 152-residue polypeptide: Large ribosomal subunit protein uL15 (152 aa).

Positions 31–58 (GASCGFGMRGQKSRSGRPTRPGFEGGQM) are disordered.

It belongs to the universal ribosomal protein uL15 family. In terms of assembly, part of the 50S ribosomal subunit.

In terms of biological role, binds to the 23S rRNA. This Parasynechococcus marenigrum (strain WH8102) protein is Large ribosomal subunit protein uL15.